The following is a 502-amino-acid chain: 9-beta-pimara-7,15-diene oxidase (502 aa).

Helical transmembrane passes span 4-26 and 106-128; these read INSE…ALLT and LLVS…GAYW. A heme-binding site is contributed by C438.

It belongs to the cytochrome P450 family. It depends on heme as a cofactor.

It is found in the membrane. The catalysed reaction is 9beta-pimara-7,15-diene + 3 reduced [NADPH--hemoprotein reductase] + 3 O2 = 9beta-pimara-7,15-dien-19-oate + 3 oxidized [NADPH--hemoprotein reductase] + 4 H2O + 4 H(+). Involved in momilactone phytoalexins biosynthesis; acts as a multifunctional diterpene oxidase. Participates in the biosynthetic steps between 9-beta-pimara-7,15-diene and 3-beta-hydroxy-9-beta-pimara-7,15-dien-19,6-beta-olide. Also catalyzes consecutive oxidations at C19 of syn-stemod-13(17)-ene. This Oryza sativa subsp. japonica (Rice) protein is 9-beta-pimara-7,15-diene oxidase (CYP99A3).